Here is a 649-residue protein sequence, read N- to C-terminus: Exoribonuclease 2 (649 aa).

The 328-residue stretch at 190–517 (RKDLTDLDFI…NHRLLKSIIK (328 aa)) folds into the RNB domain. The S1 motif domain maps to 562–644 (NQKFNAEITD…KTRSIIAKPV (83 aa)).

This sequence belongs to the RNR ribonuclease family. RNase II subfamily.

The protein localises to the cytoplasm. It catalyses the reaction Exonucleolytic cleavage in the 3'- to 5'-direction to yield nucleoside 5'-phosphates.. Its function is as follows. Involved in mRNA degradation. Hydrolyzes single-stranded polyribonucleotides processively in the 3' to 5' direction. The sequence is that of Exoribonuclease 2 from Buchnera aphidicola subsp. Acyrthosiphon pisum (strain 5A).